Reading from the N-terminus, the 244-residue chain is Phosphatidylserine decarboxylase proenzyme (244 aa).

Residue serine 212 is the Schiff-base intermediate with substrate; via pyruvic acid of the active site. Residue serine 212 is modified to Pyruvic acid (Ser); by autocatalysis.

It belongs to the phosphatidylserine decarboxylase family. PSD-A subfamily. Heterodimer of a large membrane-associated beta subunit and a small pyruvoyl-containing alpha subunit. Requires pyruvate as cofactor. Post-translationally, is synthesized initially as an inactive proenzyme. Formation of the active enzyme involves a self-maturation process in which the active site pyruvoyl group is generated from an internal serine residue via an autocatalytic post-translational modification. Two non-identical subunits are generated from the proenzyme in this reaction, and the pyruvate is formed at the N-terminus of the alpha chain, which is derived from the carboxyl end of the proenzyme. The post-translation cleavage follows an unusual pathway, termed non-hydrolytic serinolysis, in which the side chain hydroxyl group of the serine supplies its oxygen atom to form the C-terminus of the beta chain, while the remainder of the serine residue undergoes an oxidative deamination to produce ammonia and the pyruvoyl prosthetic group on the alpha chain.

The protein localises to the cell membrane. The catalysed reaction is a 1,2-diacyl-sn-glycero-3-phospho-L-serine + H(+) = a 1,2-diacyl-sn-glycero-3-phosphoethanolamine + CO2. It functions in the pathway phospholipid metabolism; phosphatidylethanolamine biosynthesis; phosphatidylethanolamine from CDP-diacylglycerol: step 2/2. In terms of biological role, catalyzes the formation of phosphatidylethanolamine (PtdEtn) from phosphatidylserine (PtdSer). This chain is Phosphatidylserine decarboxylase proenzyme, found in Granulibacter bethesdensis (strain ATCC BAA-1260 / CGDNIH1).